The primary structure comprises 151 residues: UPF0208 membrane protein YfbV (151 aa).

At 1 to 45 (MSTPDNRSVNFFSLFRRGQHYAKTWPMEKRLAPVFVENRVIRMTR) the chain is on the cytoplasmic side. Residues 46 to 65 (YAIRFMPPVAVFTLCWQIAL) traverse the membrane as a helical segment. The Periplasmic portion of the chain corresponds to 66 to 68 (GGQ). A helical membrane pass occupies residues 69 to 91 (LGPAVATALFALSLPMQGLWWLG). Residues 92–151 (KRSLTPLPPSILNWFYEVRGKLQEAGQALAPVEGKPDYQALADTLKRAFKQLDKTFLDDL) lie on the Cytoplasmic side of the membrane.

Belongs to the UPF0208 family.

The protein localises to the cell inner membrane. The polypeptide is UPF0208 membrane protein YfbV (yfbV) (Salmonella typhi).